Reading from the N-terminus, the 510-residue chain is Probable cytochrome P450 312a1 (510 aa).

Residue Cys-455 participates in heme binding.

This sequence belongs to the cytochrome P450 family. The cofactor is heme.

The protein localises to the endoplasmic reticulum membrane. Its subcellular location is the microsome membrane. Its function is as follows. May be involved in the metabolism of insect hormones and in the breakdown of synthetic insecticides. This is Probable cytochrome P450 312a1 (Cyp312a1) from Drosophila melanogaster (Fruit fly).